Reading from the N-terminus, the 596-residue chain is Aspartate--tRNA(Asp/Asn) ligase (596 aa).

Glu172 contributes to the L-aspartate binding site. The aspartate stretch occupies residues 196–199 (QLFK). Arg218 contacts L-aspartate. ATP is bound by residues 218–220 (RDE) and Gln227. His455 contacts L-aspartate. Glu489 contacts ATP. Residue Arg496 coordinates L-aspartate. 541–544 (GLDR) is a binding site for ATP.

The protein belongs to the class-II aminoacyl-tRNA synthetase family. Type 1 subfamily. In terms of assembly, homodimer.

Its subcellular location is the cytoplasm. It carries out the reaction tRNA(Asx) + L-aspartate + ATP = L-aspartyl-tRNA(Asx) + AMP + diphosphate. In terms of biological role, aspartyl-tRNA synthetase with relaxed tRNA specificity since it is able to aspartylate not only its cognate tRNA(Asp) but also tRNA(Asn). Reaction proceeds in two steps: L-aspartate is first activated by ATP to form Asp-AMP and then transferred to the acceptor end of tRNA(Asp/Asn). The chain is Aspartate--tRNA(Asp/Asn) ligase from Bordetella bronchiseptica (strain ATCC BAA-588 / NCTC 13252 / RB50) (Alcaligenes bronchisepticus).